Here is a 339-residue protein sequence, read N- to C-terminus: Lipoate-protein ligase A (339 aa).

The region spanning 29 to 216 (DPSQQVLFLW…SFENFYAGKA (188 aa)) is the BPL/LPL catalytic domain. Residues arginine 71, 76 to 79 (GAVF), and lysine 134 contribute to the ATP site. Lysine 134 is a (R)-lipoate binding site.

This sequence belongs to the LplA family. As to quaternary structure, monomer.

The protein localises to the cytoplasm. The enzyme catalyses L-lysyl-[lipoyl-carrier protein] + (R)-lipoate + ATP = N(6)-[(R)-lipoyl]-L-lysyl-[lipoyl-carrier protein] + AMP + diphosphate + H(+). It functions in the pathway protein modification; protein lipoylation via exogenous pathway; protein N(6)-(lipoyl)lysine from lipoate: step 1/2. It participates in protein modification; protein lipoylation via exogenous pathway; protein N(6)-(lipoyl)lysine from lipoate: step 2/2. Functionally, catalyzes both the ATP-dependent activation of exogenously supplied lipoate to lipoyl-AMP and the transfer of the activated lipoyl onto the lipoyl domains of lipoate-dependent enzymes. This chain is Lipoate-protein ligase A, found in Bdellovibrio bacteriovorus (strain ATCC 15356 / DSM 50701 / NCIMB 9529 / HD100).